Consider the following 615-residue polypeptide: Chaperone protein DnaK (615 aa).

At Thr-195 the chain carries Phosphothreonine; by autocatalysis. Residues 592–615 (EKGAQAASGKGPDDVIDADYKPAD) form a disordered region.

It belongs to the heat shock protein 70 family.

Its function is as follows. Acts as a chaperone. The protein is Chaperone protein DnaK of Thermus thermophilus (strain ATCC BAA-163 / DSM 7039 / HB27).